Here is a 218-residue protein sequence, read N- to C-terminus: YlmG homolog protein 1-2, chloroplastic (218 aa).

The transit peptide at 1 to 83 directs the protein to the chloroplast; that stretch reads MASFTTNSLA…TRSITTLVLL (83 aa). 2 helical membrane passes run 133-153 and 187-207; these read LTVV…VLMV and IIPP…AVLG.

This sequence belongs to the YggT family.

The protein resides in the plastid. The protein localises to the chloroplast thylakoid membrane. Functionally, not required for the biogenesis and accumulation of native cytochrome b6 in the thylakoid membrane. Not functionally involved in the pathway for covalent binding of the c-type heme to cytochrome b6. In Arabidopsis thaliana (Mouse-ear cress), this protein is YlmG homolog protein 1-2, chloroplastic.